A 412-amino-acid polypeptide reads, in one-letter code: Serine hydroxymethyltransferase (412 aa).

(6S)-5,6,7,8-tetrahydrofolate is bound by residues Leu119 and 123 to 125 (GHL). Lys228 carries the post-translational modification N6-(pyridoxal phosphate)lysine.

It belongs to the SHMT family. In terms of assembly, homodimer. Pyridoxal 5'-phosphate is required as a cofactor.

The protein localises to the cytoplasm. The catalysed reaction is (6R)-5,10-methylene-5,6,7,8-tetrahydrofolate + glycine + H2O = (6S)-5,6,7,8-tetrahydrofolate + L-serine. It participates in one-carbon metabolism; tetrahydrofolate interconversion. The protein operates within amino-acid biosynthesis; glycine biosynthesis; glycine from L-serine: step 1/1. Its function is as follows. Catalyzes the reversible interconversion of serine and glycine with tetrahydrofolate (THF) serving as the one-carbon carrier. This reaction serves as the major source of one-carbon groups required for the biosynthesis of purines, thymidylate, methionine, and other important biomolecules. Also exhibits THF-independent aldolase activity toward beta-hydroxyamino acids, producing glycine and aldehydes, via a retro-aldol mechanism. The sequence is that of Serine hydroxymethyltransferase from Thermodesulfovibrio yellowstonii (strain ATCC 51303 / DSM 11347 / YP87).